The primary structure comprises 172 residues: R-phycocyanin-1 beta chain (172 aa).

Asn-72 carries the post-translational modification N4-methylasparagine. (2R,3E)-phycocyanobilin is bound at residue Cys-82. Cys-153 contacts (2R,3E)-phycoerythrobilin.

This sequence belongs to the phycobiliprotein family. As to quaternary structure, heterodimer of an alpha and a beta chain. Dimers further assemble into trimers and the trimers into hexamers. The basic functional unit of phycobiliproteins is a ring-shaped hexamer formed from two back-to-back trimers contacting via the alpha chain subunits. The trimers are composed of alpha/beta subunit heterodimers arranged around a three-fold axis of symmetry. The phycoerythrins also contain a gamma subunit which is located in the center of the hexamer. Post-translationally, contains two covalently linked bilin chromophores.

It is found in the plastid. Its subcellular location is the chloroplast thylakoid membrane. In terms of biological role, light-harvesting photosynthetic bile pigment-protein from the phycobiliprotein complex (phycobilisome, PBS). Phycocyanin is the major phycobiliprotein in the PBS rod. This chain is R-phycocyanin-1 beta chain (rpcB), found in Porphyridium purpureum (Red alga).